A 631-amino-acid polypeptide reads, in one-letter code: Phosphomethylpyrimidine synthase (631 aa).

Substrate contacts are provided by residues Asn-239, Met-268, Tyr-297, His-333, Ser-353–Gly-355, Asp-394–Arg-397, and Glu-433. Position 437 (His-437) interacts with Zn(2+). Tyr-460 is a substrate binding site. Residue His-501 participates in Zn(2+) binding. Cys-581, Cys-584, and Cys-589 together coordinate [4Fe-4S] cluster.

The protein belongs to the ThiC family. As to quaternary structure, homodimer. [4Fe-4S] cluster is required as a cofactor.

The enzyme catalyses 5-amino-1-(5-phospho-beta-D-ribosyl)imidazole + S-adenosyl-L-methionine = 4-amino-2-methyl-5-(phosphooxymethyl)pyrimidine + CO + 5'-deoxyadenosine + formate + L-methionine + 3 H(+). The protein operates within cofactor biosynthesis; thiamine diphosphate biosynthesis. Functionally, catalyzes the synthesis of the hydroxymethylpyrimidine phosphate (HMP-P) moiety of thiamine from aminoimidazole ribotide (AIR) in a radical S-adenosyl-L-methionine (SAM)-dependent reaction. The protein is Phosphomethylpyrimidine synthase of Shigella boydii serotype 4 (strain Sb227).